We begin with the raw amino-acid sequence, 1194 residues long: Chitin synthase C (1194 aa).

Disordered stretches follow at residues 1–91 (MSLP…PNYL) and 136–177 (GAHG…RRKA). A compositionally biased stretch (basic and acidic residues) spans 12–23 (PRREETSAFREP). Basic residues predominate over residues 42 to 54 (PRHHRHHRSHSSR). Composition is skewed to basic and acidic residues over residues 55-69 (HQHD…EGGI) and 76-85 (VKPERGRMDP). Residues 150 to 164 (TRHRSKKRKGSRKIS) show a composition bias toward basic residues. Residues 221–241 (IGLISIILMIAAFVGFLTFGF) form a helical membrane-spanning segment. Asparagine 351 and asparagine 390 each carry an N-linked (GlcNAc...) asparagine glycan. A helical membrane pass occupies residues 476–496 (YVSLIFILSIVIVKFAFALLF). Asparagine 582, asparagine 608, asparagine 885, and asparagine 1014 each carry an N-linked (GlcNAc...) asparagine glycan. 3 helical membrane-spanning segments follow: residues 1039-1059 (FVIF…SFTI), 1073-1093 (IIPL…VVVT), and 1097-1117 (LVYV…NFVL).

The protein belongs to the chitin synthase family. Class V subfamily.

It localises to the cell membrane. The enzyme catalyses [(1-&gt;4)-N-acetyl-beta-D-glucosaminyl](n) + UDP-N-acetyl-alpha-D-glucosamine = [(1-&gt;4)-N-acetyl-beta-D-glucosaminyl](n+1) + UDP + H(+). Polymerizes chitin, a structural polymer of the cell wall and septum, by transferring the sugar moiety of UDP-GlcNAc to the non-reducing end of the growing chitin polymer. Responsible for synthesis of 30-40% of the chitin in the cells. ChsA and chsD play redundant functions in conidia formation. The chitin synthesized by the chsD-encoded isozyme contributes to the rigidity of the walls of germinating conidia, of the subapical region of hyphae, and of conidiophore vesicles, but is not necessary for normal morphology of these cells. The polypeptide is Chitin synthase C (Emericella nidulans (strain FGSC A4 / ATCC 38163 / CBS 112.46 / NRRL 194 / M139) (Aspergillus nidulans)).